The chain runs to 326 residues: Protein GVP36 (326 aa).

Serine 2 carries the N-acetylserine modification. Phosphoserine is present on serine 2. Residues lysine 13, lysine 305, and lysine 313 each participate in a glycyl lysine isopeptide (Lys-Gly) (interchain with G-Cter in ubiquitin) cross-link. The disordered stretch occupies residues 299–326 (AEEPEAKPEVAEEEKPQTAISMNDEDDA). The segment covering 302-314 (PEAKPEVAEEEKP) has biased composition (basic and acidic residues). At serine 319 the chain carries Phosphoserine.

Its subcellular location is the golgi apparatus membrane. In Saccharomyces cerevisiae (strain ATCC 204508 / S288c) (Baker's yeast), this protein is Protein GVP36 (GVP36).